A 98-amino-acid polypeptide reads, in one-letter code: NADH-ubiquinone oxidoreductase chain 4L (98 aa).

3 consecutive transmembrane segments (helical) span residues 1–21 (MSMVYINIFLAFTLSFMGLLI), 29–49 (SLLCLEGMMLSLFVLMTVTIL), and 61–81 (IILLVFAACEAALGLSLLVMV).

It belongs to the complex I subunit 4L family. Core subunit of respiratory chain NADH dehydrogenase (Complex I) which is composed of 45 different subunits.

It is found in the mitochondrion inner membrane. It catalyses the reaction a ubiquinone + NADH + 5 H(+)(in) = a ubiquinol + NAD(+) + 4 H(+)(out). In terms of biological role, core subunit of the mitochondrial membrane respiratory chain NADH dehydrogenase (Complex I) which catalyzes electron transfer from NADH through the respiratory chain, using ubiquinone as an electron acceptor. Part of the enzyme membrane arm which is embedded in the lipid bilayer and involved in proton translocation. This is NADH-ubiquinone oxidoreductase chain 4L (MT-ND4L) from Taxidea taxus (American badger).